The following is a 148-amino-acid chain: UPF0756 membrane protein YeaL (148 aa).

The next 4 membrane-spanning stretches (helical) occupy residues 14–34 (ALGFISHNTTVAVSILVLIIV), 51–71 (LSIGIIILTIGVMAPIASGTL), 86–106 (LVAIAVGVIVSWLGGRGVTLM), and 121–141 (VLGVALFRGVPVGPLIAAGLV).

The protein belongs to the UPF0756 family.

It localises to the cell membrane. In Shigella boydii serotype 18 (strain CDC 3083-94 / BS512), this protein is UPF0756 membrane protein YeaL.